The primary structure comprises 163 residues: SsrA-binding protein (163 aa).

It belongs to the SmpB family.

The protein localises to the cytoplasm. Required for rescue of stalled ribosomes mediated by trans-translation. Binds to transfer-messenger RNA (tmRNA), required for stable association of tmRNA with ribosomes. tmRNA and SmpB together mimic tRNA shape, replacing the anticodon stem-loop with SmpB. tmRNA is encoded by the ssrA gene; the 2 termini fold to resemble tRNA(Ala) and it encodes a 'tag peptide', a short internal open reading frame. During trans-translation Ala-aminoacylated tmRNA acts like a tRNA, entering the A-site of stalled ribosomes, displacing the stalled mRNA. The ribosome then switches to translate the ORF on the tmRNA; the nascent peptide is terminated with the 'tag peptide' encoded by the tmRNA and targeted for degradation. The ribosome is freed to recommence translation, which seems to be the essential function of trans-translation. This is SsrA-binding protein from Corynebacterium diphtheriae (strain ATCC 700971 / NCTC 13129 / Biotype gravis).